We begin with the raw amino-acid sequence, 63 residues long: Protein CYSTEINE-RICH TRANSMEMBRANE MODULE 12 (63 aa).

The disordered stretch occupies residues 1 to 34; it reads MQDMRDQNPPQGYPAAEQVSEQPGQDKKKKKPRF. The chain crosses the membrane as a helical span at residues 40–56; that stretch reads KGDRGFIEGCLFALCCC.

Belongs to the CYSTM1 family. Homodimer and heterodimers. Binds weakly to CYSTM4, CYSTM6 and CYSTM7. In terms of tissue distribution, mostly expressed in roots, flowers and siliques and, to a lower extent, in stems and leaves.

The protein resides in the cell membrane. It localises to the cytoplasm. Its function is as follows. Involved in resistance to abiotic stress. The chain is Protein CYSTEINE-RICH TRANSMEMBRANE MODULE 12 from Arabidopsis thaliana (Mouse-ear cress).